The sequence spans 360 residues: DNA replication and repair protein RecF (360 aa).

30–37 lines the ATP pocket; it reads GQNGSGKT.

It belongs to the RecF family.

Its subcellular location is the cytoplasm. Functionally, the RecF protein is involved in DNA metabolism; it is required for DNA replication and normal SOS inducibility. RecF binds preferentially to single-stranded, linear DNA. It also seems to bind ATP. In Shewanella loihica (strain ATCC BAA-1088 / PV-4), this protein is DNA replication and repair protein RecF.